Reading from the N-terminus, the 264-residue chain is Transcription factor bHLH52 (264 aa).

Residues 134–183 enclose the bHLH domain; sequence RELSAQSIAARKRRRRITEKTQELGKLIPGSQKHNTAEMFNAAAKYVKFL.

In terms of assembly, homodimer. In terms of tissue distribution, expressed constitutively in roots, leaves, stems, and flowers.

The protein localises to the nucleus. The protein is Transcription factor bHLH52 (BHLH52) of Arabidopsis thaliana (Mouse-ear cress).